Reading from the N-terminus, the 110-residue chain is Nucleoid-associated protein ESA_02800 (110 aa).

The interval 89–110 (QKEKMASVSSGMQLPPGFKMPF) is disordered.

It belongs to the YbaB/EbfC family. Homodimer.

The protein resides in the cytoplasm. Its subcellular location is the nucleoid. In terms of biological role, binds to DNA and alters its conformation. May be involved in regulation of gene expression, nucleoid organization and DNA protection. The sequence is that of Nucleoid-associated protein ESA_02800 from Cronobacter sakazakii (strain ATCC BAA-894) (Enterobacter sakazakii).